We begin with the raw amino-acid sequence, 94 residues long: Large ribosomal subunit protein eL42 (94 aa).

Cysteine 11, cysteine 14, cysteine 71, and cysteine 74 together coordinate Zn(2+). The C4-type zinc-finger motif lies at cysteine 11–cysteine 74.

This sequence belongs to the eukaryotic ribosomal protein eL42 family. As to quaternary structure, part of the 50S ribosomal subunit. Zn(2+) serves as cofactor.

In terms of biological role, binds to the 23S rRNA. This is Large ribosomal subunit protein eL42 from Thermococcus kodakarensis (strain ATCC BAA-918 / JCM 12380 / KOD1) (Pyrococcus kodakaraensis (strain KOD1)).